We begin with the raw amino-acid sequence, 493 residues long: Cysteine--tRNA ligase (493 aa).

Cysteine 29 serves as a coordination point for Zn(2+). Residues valine 31–histidine 41 carry the 'HIGH' region motif. Zn(2+) contacts are provided by cysteine 209, histidine 234, and glutamate 238. The short motif at lysine 266–serine 270 is the 'KMSKS' region element. Lysine 269 lines the ATP pocket.

It belongs to the class-I aminoacyl-tRNA synthetase family. Monomer. Zn(2+) serves as cofactor.

Its subcellular location is the cytoplasm. It carries out the reaction tRNA(Cys) + L-cysteine + ATP = L-cysteinyl-tRNA(Cys) + AMP + diphosphate. This is Cysteine--tRNA ligase from Pelobacter propionicus (strain DSM 2379 / NBRC 103807 / OttBd1).